A 308-amino-acid chain; its full sequence is Ribosomal RNA large subunit methyltransferase F (308 aa).

Belongs to the methyltransferase superfamily. METTL16/RlmF family.

The protein resides in the cytoplasm. The enzyme catalyses adenosine(1618) in 23S rRNA + S-adenosyl-L-methionine = N(6)-methyladenosine(1618) in 23S rRNA + S-adenosyl-L-homocysteine + H(+). Functionally, specifically methylates the adenine in position 1618 of 23S rRNA. This is Ribosomal RNA large subunit methyltransferase F from Salmonella agona (strain SL483).